Reading from the N-terminus, the 459-residue chain is MSQSSASSIFTVSRLNQTVRELLEREMGQIWLTAEISNFSQPASGHWYFTLKDDRAQVRCAMFRNSNRRTTFRPQNGQQVLVRASITLYEPRGDYQLIAESMQPAGDGLLQQQFEQLKQQLAAEGLFDQSHKQPLPSPAKQVGVITSASGAALHDVLHVLQRRDPSLPVIIYPTSVQGVDAPLQIVRAIQLANLRAECDVLIVGRGGGSLEDLWSFNDERVARAIFNSHIPIVSAVGHETDVTIADFVADLRAPTPSAAAELVSRNQIELVRQIQGQQQRMEMAMDYYLAQRNQQFTRLEHRLQQQHPHLRLARQQTLLLKLQRRLEESAQTQIRLLSKRTERLQQRLQQVQPQGQIHRYNQRVQQQEYRLRQAVERQLNGYRQRFGIACSQLEAVSPLATLARGYSVTQTPAGALLKTTKQVQAGDKLTTRLQDGWVESEITQVTVAKKSRQKKVVTQ.

Belongs to the XseA family. In terms of assembly, heterooligomer composed of large and small subunits.

It is found in the cytoplasm. It catalyses the reaction Exonucleolytic cleavage in either 5'- to 3'- or 3'- to 5'-direction to yield nucleoside 5'-phosphates.. In terms of biological role, bidirectionally degrades single-stranded DNA into large acid-insoluble oligonucleotides, which are then degraded further into small acid-soluble oligonucleotides. In Yersinia pseudotuberculosis serotype IB (strain PB1/+), this protein is Exodeoxyribonuclease 7 large subunit.